The chain runs to 482 residues: ADP-ribosylation factor GTPase-activating protein effector protein 1 (482 aa).

Residues 116-156 (QHKSTHSHHINHQTHPIHSSSSNSNSNNRIPTKTDSSKQHT) form a disordered region. The segment covering 118-127 (KSTHSHHINH) has biased composition (basic residues). Residues 134 to 143 (SSSSNSNSNN) show a composition bias toward low complexity. The Arf-GAP domain maps to 170-297 (DELLSIVRKI…FVIDSNQGRE (128 aa)). Residues 186 to 210 (CCDCGSTATVEWVSINLLCILCIKC) form a C4-type zinc finger.

Its subcellular location is the cytoplasm. GTPase-activating protein (GAP) for the ADP ribosylation factors ARF1 and ARF2. May be involved in the endocytic pathway. In Saccharomyces cerevisiae (strain ATCC 204508 / S288c) (Baker's yeast), this protein is ADP-ribosylation factor GTPase-activating protein effector protein 1 (AGE1).